Consider the following 93-residue polypeptide: Cobalt transport protein CbiN (93 aa).

The next 2 helical transmembrane spans lie at 5-25 (LMLLAMVVALVILPFFINHGG) and 63-83 (LLFTLQGSLGAAVIFYILGYC).

Belongs to the CbiN family. In terms of assembly, forms an energy-coupling factor (ECF) transporter complex composed of an ATP-binding protein (A component, CbiO), a transmembrane protein (T component, CbiQ) and 2 possible substrate-capture proteins (S components, CbiM and CbiN) of unknown stoichimetry.

The protein resides in the cell inner membrane. It functions in the pathway cofactor biosynthesis; adenosylcobalamin biosynthesis. In terms of biological role, part of the energy-coupling factor (ECF) transporter complex CbiMNOQ involved in cobalt import. The chain is Cobalt transport protein CbiN from Salmonella arizonae (strain ATCC BAA-731 / CDC346-86 / RSK2980).